Consider the following 244-residue polypeptide: 7-cyano-7-deazaguanine synthase (244 aa).

17–27 (FSGGQDSTTCL) lines the ATP pocket. Cys-205, Cys-220, Cys-223, and Cys-226 together coordinate Zn(2+).

Belongs to the QueC family. Requires Zn(2+) as cofactor.

The catalysed reaction is 7-carboxy-7-deazaguanine + NH4(+) + ATP = 7-cyano-7-deazaguanine + ADP + phosphate + H2O + H(+). It functions in the pathway purine metabolism; 7-cyano-7-deazaguanine biosynthesis. Its function is as follows. Catalyzes the ATP-dependent conversion of 7-carboxy-7-deazaguanine (CDG) to 7-cyano-7-deazaguanine (preQ(0)). The protein is 7-cyano-7-deazaguanine synthase of Bordetella pertussis (strain Tohama I / ATCC BAA-589 / NCTC 13251).